Reading from the N-terminus, the 408-residue chain is MSLSVTRENFDEWMVPVYVPAPFIPVRGEGSRLWDQQGKEYIDFAGGIAVNALGHAHPALREALNEQANRFWHTGNGYTNEPALRLAKKLIDATFAERVFFCNSGAEANEAALKLARKYAHDRVGNHKSGIVAFKNAFHGRTLFTVSAGGQPTYSQDFAPLPPDIRHAAYNDLNSASALIDDNTCAVIVEPVQGEGGVIPATKAFLQGLRELCDRHQALLIFDEVQTGVGRTGELYAYMHYGVTPDILTTAKALGGGFPIGAMLTTQDYASVMTPGTHGTTYGGNPLATAVAGKVLDIINTPEMQNGVRQRHDAFIERLNTINARFGMFSEIRGLGLLLGCVLQTEFAGKAKLIAQEAAKAGVMVLIAGGDVVRFAPALNVSDEEIATGLDRFALACERLQTGGASCG.

K252 bears the N6-(pyridoxal phosphate)lysine mark.

Belongs to the class-III pyridoxal-phosphate-dependent aminotransferase family. AstC subfamily. Pyridoxal 5'-phosphate serves as cofactor.

The enzyme catalyses N(2)-succinyl-L-ornithine + 2-oxoglutarate = N-succinyl-L-glutamate 5-semialdehyde + L-glutamate. It participates in amino-acid degradation; L-arginine degradation via AST pathway; L-glutamate and succinate from L-arginine: step 3/5. Catalyzes the transamination of N(2)-succinylornithine and alpha-ketoglutarate into N(2)-succinylglutamate semialdehyde and glutamate. Can also act as an acetylornithine aminotransferase. The sequence is that of Succinylornithine transaminase from Salmonella enteritidis PT4 (strain P125109).